The following is a 129-amino-acid chain: D-ribose pyranase (129 aa).

The active-site Proton donor is H20. Residues D28, H96, and 118–120 (YAN) contribute to the substrate site.

The protein belongs to the RbsD / FucU family. RbsD subfamily. As to quaternary structure, homodecamer.

The protein resides in the cytoplasm. It catalyses the reaction beta-D-ribopyranose = beta-D-ribofuranose. It functions in the pathway carbohydrate metabolism; D-ribose degradation; D-ribose 5-phosphate from beta-D-ribopyranose: step 1/2. Functionally, catalyzes the interconversion of beta-pyran and beta-furan forms of D-ribose. This chain is D-ribose pyranase, found in Streptomyces coelicolor (strain ATCC BAA-471 / A3(2) / M145).